Consider the following 122-residue polypeptide: Large ribosomal subunit protein uL14c (122 aa).

This sequence belongs to the universal ribosomal protein uL14 family. Part of the 50S ribosomal subunit.

Its subcellular location is the plastid. It localises to the chloroplast. Functionally, binds to 23S rRNA. In Stigeoclonium helveticum (Green alga), this protein is Large ribosomal subunit protein uL14c.